Here is a 274-residue protein sequence, read N- to C-terminus: MNEHEFAQKTIAIRRKVREQRPLVHHITNFVVMNITANVTLAVGASPVMAHAHEEVKEMAAFAGALNLNIGTLTPYWIDAMVMAGKVAEQRGIPIVLDPVGSGATPLRTGAAKKILAEVGVNVIRGNASEVMSLFADKETVNIRGVDSLETVDAVRHEAGLLAGELEKVVAVTGPVDIVTDGTRTLEVHNGTPMFGRVTGTGCSATTVISCFCAVEPDLLVASAAALGYYGLAGEEAARISNGPGSFQAALLDTLYNLPEKIIQEKLRIREVLP.

Met-49 is a substrate binding site. Residues Arg-125 and Thr-173 each contribute to the ATP site. Gly-200 is a binding site for substrate.

It belongs to the Thz kinase family. It depends on Mg(2+) as a cofactor.

It catalyses the reaction 5-(2-hydroxyethyl)-4-methylthiazole + ATP = 4-methyl-5-(2-phosphooxyethyl)-thiazole + ADP + H(+). It functions in the pathway cofactor biosynthesis; thiamine diphosphate biosynthesis; 4-methyl-5-(2-phosphoethyl)-thiazole from 5-(2-hydroxyethyl)-4-methylthiazole: step 1/1. In terms of biological role, catalyzes the phosphorylation of the hydroxyl group of 4-methyl-5-beta-hydroxyethylthiazole (THZ). The protein is Hydroxyethylthiazole kinase of Desulfosudis oleivorans (strain DSM 6200 / JCM 39069 / Hxd3) (Desulfococcus oleovorans).